Here is a 492-residue protein sequence, read N- to C-terminus: 2,3-bisphosphoglycerate-independent phosphoglycerate mutase (492 aa).

The Mn(2+) site is built by Asp-11 and Ser-61. Ser-61 serves as the catalytic Phosphoserine intermediate. Substrate-binding positions include His-118, 147-148 (RD), Arg-178, Arg-184, 248-251 (RNDR), and Lys-320. Residues Asp-386, His-390, Asp-427, His-428, and His-445 each coordinate Mn(2+).

It belongs to the BPG-independent phosphoglycerate mutase family. Monomer. Mn(2+) is required as a cofactor.

It carries out the reaction (2R)-2-phosphoglycerate = (2R)-3-phosphoglycerate. It functions in the pathway carbohydrate degradation; glycolysis; pyruvate from D-glyceraldehyde 3-phosphate: step 3/5. Catalyzes the interconversion of 2-phosphoglycerate and 3-phosphoglycerate. The polypeptide is 2,3-bisphosphoglycerate-independent phosphoglycerate mutase (Campylobacter jejuni subsp. doylei (strain ATCC BAA-1458 / RM4099 / 269.97)).